The chain runs to 327 residues: Ankyrin repeat domain-containing protein SOWAHD (327 aa).

Residues 1-31 (MAQALEDGNPLPKASNRPAESEAPSDPQIKD) form a disordered region. ANK repeat units lie at residues 112–141 (CLEP…AEPS), 147–162 (DPIT…AKHG), and 186–216 (PGSG…LGAD). The disordered stretch occupies residues 251–311 (ERDRKRENAN…EKKASSTQEG (61 aa)). Positions 260–275 (NNNSSRTTTTTTTTSR) are enriched in low complexity. Residues 292 to 305 (HYKEASQPVKEKKA) show a composition bias toward basic and acidic residues.

It belongs to the SOWAH family.

The protein is Ankyrin repeat domain-containing protein SOWAHD (Sowahd) of Mus musculus (Mouse).